The primary structure comprises 316 residues: MMGLTEGVFLILSGTQFTLGILVNCFIELVNGSSWFKTKRMSLSDFIITTLALLRIILLCIILTDSFLIEFSPNTHDSGIIMQIIDVSWTFTNHLSIWLATCLGVLYCLKIASFSHPTFLWLKWRVSRVMVWMLLGALLLSCGSTASLINEFKLYSVFRGIEATRNVTEHFRKKRSEYYLIHVLGTLWYLPPLIVSLASYSLLIFSLGRHTRQMLQNGTSSRDPTTEAHKRAIRIILSFFFLFLLYFLAFLIASFGNFLPKTKMAKMIGEVMTMFYPAGHSFILILGNSKLKQTFVVMLRCESGHLKPGSKGPIFS.

Residues 1–6 (MMGLTE) lie on the Extracellular side of the membrane. A helical transmembrane segment spans residues 7 to 27 (GVFLILSGTQFTLGILVNCFI). At 28 to 42 (ELVNGSSWFKTKRMS) the chain is on the cytoplasmic side. The helical transmembrane segment at 43 to 63 (LSDFIITTLALLRIILLCIIL) threads the bilayer. Topologically, residues 64–94 (TDSFLIEFSPNTHDSGIIMQIIDVSWTFTNH) are extracellular. A helical transmembrane segment spans residues 95–115 (LSIWLATCLGVLYCLKIASFS). Over 116-128 (HPTFLWLKWRVSR) the chain is Cytoplasmic. Residues 129-149 (VMVWMLLGALLLSCGSTASLI) form a helical membrane-spanning segment. The Extracellular portion of the chain corresponds to 150–186 (NEFKLYSVFRGIEATRNVTEHFRKKRSEYYLIHVLGT). N-linked (GlcNAc...) asparagine glycosylation occurs at N166. Residues 187–207 (LWYLPPLIVSLASYSLLIFSL) traverse the membrane as a helical segment. Residues 208-234 (GRHTRQMLQNGTSSRDPTTEAHKRAIR) lie on the Cytoplasmic side of the membrane. A helical transmembrane segment spans residues 235–255 (IILSFFFLFLLYFLAFLIASF). The Extracellular segment spans residues 256–266 (GNFLPKTKMAK). A helical membrane pass occupies residues 267-287 (MIGEVMTMFYPAGHSFILILG). The Cytoplasmic segment spans residues 288–316 (NSKLKQTFVVMLRCESGHLKPGSKGPIFS).

The protein belongs to the G-protein coupled receptor T2R family. In terms of tissue distribution, expressed in subsets of taste receptor cells of the tongue and palate epithelium and exclusively in gustducin-positive cells. Expressed in the antrum and fundus (part of the stomach), duodenum and in gastric endocrine cells.

The protein localises to the membrane. In terms of biological role, gustducin-coupled receptor implicated in the perception of bitter compounds in the oral cavity and the gastrointestinal tract. Signals through PLCB2 and the calcium-regulated cation channel TRPM5. The chain is Taste receptor type 2 member 3 (TAS2R3) from Homo sapiens (Human).